Here is a 257-residue protein sequence, read N- to C-terminus: Receptor expression-enhancing protein 4 (257 aa).

Helical transmembrane passes span 1 to 21 (MVSWMICRLVVLVFGMLCPAY) and 42 to 62 (WIVFALFMAAEIITDIFISWF). Ser152 and Ser194 each carry phosphoserine. The segment at 178–257 (PHQRPPIGYR…KKTVPSDMDS (80 aa)) is disordered. Thr196 bears the Phosphothreonine mark. At Ser202 the chain carries Phosphoserine. At Thr250 the chain carries Phosphothreonine. The residue at position 253 (Ser253) is a Phosphoserine.

This sequence belongs to the DP1 family.

Its subcellular location is the endoplasmic reticulum membrane. Functionally, microtubule-binding protein required to ensure proper cell division and nuclear envelope reassembly by sequestering the endoplasmic reticulum away from chromosomes during mitosis. Probably acts by clearing the endoplasmic reticulum membrane from metaphase chromosomes. The protein is Receptor expression-enhancing protein 4 (REEP4) of Pongo abelii (Sumatran orangutan).